The sequence spans 123 residues: Aspartate 1-decarboxylase (123 aa).

The Schiff-base intermediate with substrate; via pyruvic acid role is filled by S25. Residue S25 is modified to Pyruvic acid (Ser). T57 is a binding site for substrate. The active-site Proton donor is Y58. 73–75 (GAA) provides a ligand contact to substrate.

This sequence belongs to the PanD family. Heterooctamer of four alpha and four beta subunits. It depends on pyruvate as a cofactor. In terms of processing, is synthesized initially as an inactive proenzyme, which is activated by self-cleavage at a specific serine bond to produce a beta-subunit with a hydroxyl group at its C-terminus and an alpha-subunit with a pyruvoyl group at its N-terminus.

It localises to the cytoplasm. It catalyses the reaction L-aspartate + H(+) = beta-alanine + CO2. The protein operates within cofactor biosynthesis; (R)-pantothenate biosynthesis; beta-alanine from L-aspartate: step 1/1. In terms of biological role, catalyzes the pyruvoyl-dependent decarboxylation of aspartate to produce beta-alanine. This chain is Aspartate 1-decarboxylase, found in Clostridium novyi (strain NT).